Consider the following 466-residue polypeptide: Probable WRKY transcription factor 32 (466 aa).

Disordered stretches follow at residues 1-45 (MEED…MEDL) and 140-166 (SVPT…PRTP). Residues 8 to 38 (DEAKTYTVEKSEKVEPEKDGLSQFRDEEKSL) are compositionally biased toward basic and acidic residues. The segment at residues 162-226 (VPRTPARDGY…NKGLHTHEPP (65 aa)) is a DNA-binding region (WRKY 1). Residues cysteine 193, cysteine 198, histidine 221, and histidine 223 each contribute to the Zn(2+) site. The segment at 284–317 (HCENEAVEEPEPKRRLKKDNSQSSDSVSKPGKKN) is disordered. The WRKY 2 DNA-binding region spans 325-390 (GDVGICGDGY…YKGVHNHDMP (66 aa)). Zn(2+) contacts are provided by cysteine 356, cysteine 361, histidine 385, and histidine 387. Residues 410-439 (TSMRTRTDDQVNIPTSSQCSVGRESEKQSK) form a disordered region. The span at 419–429 (QVNIPTSSQCS) shows a compositional bias: polar residues.

This sequence belongs to the WRKY group I family.

It is found in the nucleus. Functionally, transcription factor. Interacts specifically with the W box (5'-(T)TGAC[CT]-3'), a frequently occurring elicitor-responsive cis-acting element. The protein is Probable WRKY transcription factor 32 (WRKY32) of Arabidopsis thaliana (Mouse-ear cress).